Consider the following 215-residue polypeptide: 2-phospho-L-lactate guanylyltransferase (215 aa).

It belongs to the CofC family. In terms of assembly, homodimer.

It catalyses the reaction (2S)-2-phospholactate + GTP + H(+) = (2S)-lactyl-2-diphospho-5'-guanosine + diphosphate. The protein operates within cofactor biosynthesis; coenzyme F420 biosynthesis. Functionally, guanylyltransferase that catalyzes the activation of (2S)-2-phospholactate (2-PL) as (2S)-lactyl-2-diphospho-5'-guanosine, via the condensation of 2-PL with GTP. It is involved in the biosynthesis of coenzyme F420, a hydride carrier cofactor. The chain is 2-phospho-L-lactate guanylyltransferase from Methanococcoides burtonii (strain DSM 6242 / NBRC 107633 / OCM 468 / ACE-M).